A 280-amino-acid chain; its full sequence is NAD kinase (280 aa).

Asp67 functions as the Proton acceptor in the catalytic mechanism. NAD(+)-binding positions include 67–68 (DG), Arg72, 138–139 (ND), Asp167, Ala175, 178–183 (TAYSLS), and Gln237.

The protein belongs to the NAD kinase family. A divalent metal cation serves as cofactor.

It is found in the cytoplasm. The catalysed reaction is NAD(+) + ATP = ADP + NADP(+) + H(+). Involved in the regulation of the intracellular balance of NAD and NADP, and is a key enzyme in the biosynthesis of NADP. Catalyzes specifically the phosphorylation on 2'-hydroxyl of the adenosine moiety of NAD to yield NADP. This is NAD kinase from Aeropyrum pernix (strain ATCC 700893 / DSM 11879 / JCM 9820 / NBRC 100138 / K1).